The chain runs to 126 residues: Adenosine 5'-monophosphoramidase HINT1 (126 aa).

Ala2 is modified (N-acetylalanine). An HIT domain is found at 18–126 (IFGKIIRKEI…GGRQMHWPPG (109 aa)). Lys21 and Lys30 each carry N6-acetyllysine. Residue 43–44 (DI) participates in AMP binding. Phosphoserine is present on residues Ser45 and Ser72. Residues Asn99, 105–107 (GQS), and 112–114 (HLH) contribute to the AMP site. The Histidine triad motif signature appears at 110-114 (HVHLH). The active-site Tele-AMP-histidine intermediate is His112.

It belongs to the HINT family. As to quaternary structure, homodimer. Interacts with CDK7. Interacts with RUVBL1 and RUVBL2 and is associated with the LEF1/TCF1-CTNNB1 complex and with a KAT5 histone acetyltransferase complex. Identified in a complex with MITF and CTNNB1. Interacts with CDC34 and RBX1, and is part of a SCF (SKP2-CUL1-F-box protein) E3 ubiquitin-protein ligase complex. Interacts with SUMO1, SUMO2 and RGS17. Interacts with the Ten-1 ICD form of TENM1. Interacts with CALM1; interaction increases in the presence of calcium ions.

Its subcellular location is the cytoplasm. It localises to the nucleus. The enzyme catalyses adenosine 5'-phosphoramidate + H2O = AMP + NH4(+). Exhibits adenosine 5'-monophosphoramidase activity, hydrolyzing purine nucleotide phosphoramidates with a single phosphate group such as adenosine 5'monophosphoramidate (AMP-NH2) to yield AMP and NH2. Hydrolyzes adenosine 5'monophosphomorpholidate (AMP-morpholidate) and guanosine 5'monophosphomorpholidate (GMP-morpholidate). Hydrolyzes lysyl-AMP (AMP-N-epsilon-(N-alpha-acetyl lysine methyl ester)) generated by lysine tRNA ligase, as well as Met-AMP, His-AMP and Asp-AMP, lysyl-GMP (GMP-N-epsilon-(N-alpha-acetyl lysine methyl ester)) and AMP-N-alanine methyl ester. Can also convert adenosine 5'-O-phosphorothioate and guanosine 5'-O-phosphorothioate to the corresponding nucleoside 5'-O-phosphates with concomitant release of hydrogen sulfide. In addition, functions as a scaffolding protein that modulates transcriptional activation by the LEF1/TCF1-CTNNB1 complex and by the complex formed with MITF and CTNNB1. Modulates p53/TP53 levels and p53/TP53-mediated apoptosis. Modulates proteasomal degradation of target proteins by the SCF (SKP2-CUL1-F-box protein) E3 ubiquitin-protein ligase complex. Also exhibits SUMO-specific isopeptidase activity, deconjugating SUMO1 from RANGAP1 and RGS17. This chain is Adenosine 5'-monophosphoramidase HINT1 (HINT1), found in Pongo abelii (Sumatran orangutan).